The primary structure comprises 206 residues: Ras-related protein Ral-B (206 aa).

Gly-21–Ala-29 is a binding site for GTP. Residues Tyr-43–Tyr-51 carry the Effector region motif. GTP-binding positions include Asp-68 to Gln-72, Asn-128 to Asp-131, and Ser-158 to Lys-160. Residues Met-181–Leu-206 are disordered. Cys-203 bears the Cysteine methyl ester mark. Cys-203 is lipidated: S-geranylgeranyl cysteine. A propeptide spans Cys-204–Leu-206 (removed in mature form).

Belongs to the small GTPase superfamily. Ras family. Interacts with EXOC2/Sec5 and EXOC8/Exo84. Interacts (via effector domain) with RALBP1. Prenylation is essential for membrane localization. Post-translationally, the farnesylated form confers resistance to the proapoptotic and anti-anchorage-dependent growth effects of some geranylgeranyltransferase I inhibitors.

Its subcellular location is the cell membrane. It localises to the midbody. It carries out the reaction GTP + H2O = GDP + phosphate + H(+). Its activity is regulated as follows. Alternates between an inactive form bound to GDP and an active form bound to GTP. Activated by a guanine nucleotide-exchange factor (GEF) and inactivated by a GTPase-activating protein (GAP). Functionally, multifunctional GTPase involved in a variety of cellular processes including gene expression, cell migration, cell proliferation, oncogenic transformation and membrane trafficking. Accomplishes its multiple functions by interacting with distinct downstream effectors. Acts as a GTP sensor for GTP-dependent exocytosis of dense core vesicles. Required both to stabilize the assembly of the exocyst complex and to localize functional exocyst complexes to the leading edge of migrating cells. Required for suppression of apoptosis. In late stages of cytokinesis, upon completion of the bridge formation between dividing cells, mediates exocyst recruitment to the midbody to drive abscission. Involved in ligand-dependent receptor mediated endocytosis of the EGF and insulin receptors. The protein is Ras-related protein Ral-B (Ralb) of Rattus norvegicus (Rat).